We begin with the raw amino-acid sequence, 105 residues long: MVKQIESKTAFQEALDAAGDKLVVVDFSATWCGPCKMIKPFFHSLSEKYSNVIFLEVDVDDCQDVASECEVKCMPTFQFFKKGQKVGEFSGANKEKLEATINELV.

A Thioredoxin domain is found at 2-105; that stretch reads VKQIESKTAF…KLEATINELV (104 aa). N6-acetyllysine is present on K3. At K8 the chain carries N6-succinyllysine. Catalysis depends on nucleophile residues C32 and C35. C32 and C35 are joined by a disulfide. K39 is subject to N6-acetyllysine. S-nitrosocysteine occurs at positions 62 and 69. C73 is modified (S-nitrosocysteine; alternate). K94 bears the N6-acetyllysine; alternate mark. K94 bears the N6-succinyllysine; alternate mark.

The protein belongs to the thioredoxin family. Homodimer; disulfide-linked. Interacts with TXNIP through the redox-active site. Interacts with MAP3K5 and CASP3. In case of infection, interacts with S.typhimurium protein slrP. Interacts with APEX1; the interaction stimulates the FOS/JUN AP-1 DNA-binding activity in a redox-dependent manner. In terms of processing, in the fully reduced protein, both Cys-69 and Cys-73 are nitrosylated in response to nitric oxide (NO). When two disulfide bonds are present in the protein, only Cys-73 is nitrosylated. Cys-73 can serve as donor for nitrosylation of target proteins. Post-translationally, in case of infection, ubiquitinated by S.typhimurium protein slrP, leading to its degradation.

Its subcellular location is the nucleus. The protein resides in the cytoplasm. It is found in the secreted. In terms of biological role, participates in various redox reactions through the reversible oxidation of its active center dithiol to a disulfide and catalyzes dithiol-disulfide exchange reactions. Plays a role in the reversible S-nitrosylation of cysteine residues in target proteins, and thereby contributes to the response to intracellular nitric oxide. Nitrosylates the active site Cys of CASP3 in response to nitric oxide (NO), and thereby inhibits caspase-3 activity. Induces the FOS/JUN AP-1 DNA-binding activity in ionizing radiation (IR) cells through its oxidation/reduction status and stimulates AP-1 transcriptional activity. Functionally, ADF augments the expression of the interleukin-2 receptor TAC (IL2R/P55). This chain is Thioredoxin (TXN), found in Homo sapiens (Human).